A 1174-amino-acid polypeptide reads, in one-letter code: DNA polymerase III subunit alpha (1174 aa).

Belongs to the DNA polymerase type-C family. DnaE subfamily. DNA polymerase III contains a core (composed of alpha, epsilon and theta chains) that associates with a tau subunit. This core dimerizes to form the PolIII' complex. PolIII' associates with the gamma complex (composed of gamma, delta, delta', psi and chi chains) and with the beta chain to form the complete DNA polymerase III complex.

It is found in the cytoplasm. It carries out the reaction DNA(n) + a 2'-deoxyribonucleoside 5'-triphosphate = DNA(n+1) + diphosphate. Its function is as follows. DNA polymerase III is a complex, multichain enzyme responsible for most of the replicative synthesis in bacteria. This DNA polymerase also exhibits 3' to 5' exonuclease activity. The alpha chain is the DNA polymerase. This Yersinia pestis protein is DNA polymerase III subunit alpha (dnaE).